The chain runs to 815 residues: MSGLDVRGAVSFAERTKSVDALTKKEILSALNSGEVSETSEDARFRVRELVLPDGESYSGSLLGNVPEGPGKYIWSDGCVYDGEWRRGMRHGIGNMRWASGASYDGEFSGGYMHGSGTYVDANKLTYKGRWRLNLKHGLGYQVYPNGDVFEGSWIQGLGEGPGKYTWANKNVYLGDMKGGKMSGKGTLTWVTGDSYEGSWLNGMMHGVGVYTWSDGGCYVGTWTRGLKDGKGSFYSAGTRVPVVQEFYLNALRKRGVLPDMRRQNQVASSVNMENLRVGVNRNKLSKGSLINLEQSRNGRVSLERRWSLEVSIEKVIGHGYSDLSTAVLDSGSSVQYKANIPILEREYMQGVLISELVVNNGFSRTSRRAKRKHKRLVKEAKKPGEVVIKGHRSYDLMLSLQLGIRYTVGKITPIQRRQVRTADFGPRASFWMTFPRAGSTMTPPHHSEDFKWKDYCPMVFRNLREMFKIDAADYMMSICGNDTLRELSSPGKSGSVFFLSQDDRFMIKTLRKSEVKVLLRMLPDYHHHVKTYENTLITKFFGLHRIKPSSGQKFRFVVMGNMFFTDLRIHRRFDLKGSSLGRSADKVEIDENTILKDLDLNYSFFLETSWREGLLRQLEIDSKFLEAQNIMDYSLLLGVHHRAPQHLRSQLVRSQSITTDALESVAEDDTIEDDMLSYHEGLVLVPRGSENTVTGPHIRGSRLRASAVGDEEVDLLLPGTARLQIQQGVNMPARAELIPGREDKEKQILHDCCDVVLYLGIIDILQEYNMTKKIEHAYKSLHFDSLSISAVDPTFYSQRFLEFIKKVFPQNNKS.

MORN repeat units lie at residues 58-80, 81-103, 104-126, 127-149, 150-172, 173-195, 196-218, and 219-240; these read YSGS…DGCV, YDGE…SGAS, YDGE…NKLT, YKGR…NGDV, FEGS…NKNV, YLGD…TGDS, YEGS…DGGC, and YVGT…AGTR. A PIPK domain is found at 391-809; it reads GHRSYDLMLS…RFLEFIKKVF (419 aa). The tract at residues 769–790 is activation loop; the sequence is YNMTKKIEHAYKSLHFDSLSIS.

As to quaternary structure, interacts with CINV1. As to expression, widely expressed.

The protein resides in the membrane. The protein localises to the nucleus. The enzyme catalyses a 1,2-diacyl-sn-glycero-3-phospho-(1D-myo-inositol 4-phosphate) + ATP = a 1,2-diacyl-sn-glycero-3-phospho-(1D-myo-inositol-4,5-bisphosphate) + ADP + H(+). Functionally, plays a role in sugar-mediated root development. Interaction with CINV1 induces repression of CINV1 activity and negative regulation of sugar-mediated root cell elongation. This Arabidopsis thaliana (Mouse-ear cress) protein is Phosphatidylinositol 4-phosphate 5-kinase 9 (PIP5K9).